Consider the following 519-residue polypeptide: Glucose-1-phosphate adenylyltransferase large subunit 2, chloroplastic/amyloplastic (519 aa).

This sequence belongs to the bacterial/plant glucose-1-phosphate adenylyltransferase family. Heterotetramer. As to expression, leaves and tubers.

It localises to the plastid. It is found in the chloroplast. Its subcellular location is the amyloplast. It catalyses the reaction alpha-D-glucose 1-phosphate + ATP + H(+) = ADP-alpha-D-glucose + diphosphate. The protein operates within glycan biosynthesis; starch biosynthesis. Activated by 3'phosphoglycerate, inhibited by orthophosphate. Allosteric regulation. Its function is as follows. This protein plays a role in synthesis of starch. It catalyzes the synthesis of the activated glycosyl donor, ADP-glucose from Glc-1-P and ATP. The chain is Glucose-1-phosphate adenylyltransferase large subunit 2, chloroplastic/amyloplastic (AGPS2) from Solanum tuberosum (Potato).